The chain runs to 397 residues: uncharacterized protein (397 aa).

Belongs to the ROK (NagC/XylR) family.

This is an uncharacterized protein from Escherichia coli (strain K12).